The following is a 1387-amino-acid chain: Collagen-like protein 6 (1387 aa).

An N-linked (GlcNAc...) asparagine; by host glycan is attached at N6. Collagen-like domains lie at 95-154 (GNNG…KGDI), 161-220 (GDKG…KGDN), 266-325 (GEKG…KGEM), 344-403 (GSKG…KGEK), 450-508 (IKGD…KGDI), and 512-751 (GEKG…SGSS). 3 disordered regions span residues 98–219 (GNNG…DKGD), 268–422 (KGEI…QNQG), and 454–753 (KGEK…SSCQ). Composition is skewed to basic and acidic residues over residues 114 to 181 (IKGD…KGSK), 189 to 199 (SKGDNGDKGSK), 207 to 219 (SKGD…DKGD), 268 to 340 (KGEI…DGIK), 364 to 382 (KGDR…KGDN), 390 to 405 (SKGD…EKGE), 454 to 535 (KGEK…KGDI), and 544 to 747 (KGEK…DKGE). N-linked (GlcNAc...) asparagine; by host glycosylation is found at N794, N814, N819, N826, N846, N886, N894, N969, N1032, N1077, N1123, N1200, N1224, N1232, and N1233.

In terms of processing, may be hydroxylated on lysine by the viral-encoded procollagen-lysine,2-oxoglutarate 5-dioxygenase.

The protein resides in the virion. Functionally, may participate in the formation of a layer of cross-linked glycosylated fibrils at the viral surface thus giving it a hairy-like appearance. This is Collagen-like protein 6 from Acanthamoeba polyphaga mimivirus (APMV).